The following is a 307-amino-acid chain: Aspartate carbamoyltransferase catalytic subunit (307 aa).

Residues R59 and T60 each coordinate carbamoyl phosphate. K87 contacts L-aspartate. Residues R109, H137, and Q140 each contribute to the carbamoyl phosphate site. The L-aspartate site is built by R173 and R223. Residues G266 and P267 each contribute to the carbamoyl phosphate site.

Belongs to the aspartate/ornithine carbamoyltransferase superfamily. ATCase family. In terms of assembly, heterododecamer (2C3:3R2) of six catalytic PyrB chains organized as two trimers (C3), and six regulatory PyrI chains organized as three dimers (R2).

It catalyses the reaction carbamoyl phosphate + L-aspartate = N-carbamoyl-L-aspartate + phosphate + H(+). It functions in the pathway pyrimidine metabolism; UMP biosynthesis via de novo pathway; (S)-dihydroorotate from bicarbonate: step 2/3. Functionally, catalyzes the condensation of carbamoyl phosphate and aspartate to form carbamoyl aspartate and inorganic phosphate, the committed step in the de novo pyrimidine nucleotide biosynthesis pathway. The protein is Aspartate carbamoyltransferase catalytic subunit of Helicobacter pylori (strain HPAG1).